The chain runs to 217 residues: Uridylate kinase (217 aa).

6 to 10 (KLSGR) is an ATP binding site. G38 provides a ligand contact to UMP. Residues G39 and R43 each coordinate ATP. UMP-binding positions include D60 and 107-113 (FQPGQST). Residues N134, Y139, and D142 each coordinate ATP.

Belongs to the UMP kinase family. As to quaternary structure, homohexamer.

It is found in the cytoplasm. It carries out the reaction UMP + ATP = UDP + ADP. The protein operates within pyrimidine metabolism; CTP biosynthesis via de novo pathway; UDP from UMP (UMPK route): step 1/1. With respect to regulation, inhibited by UTP. Functionally, catalyzes the reversible phosphorylation of UMP to UDP. This chain is Uridylate kinase, found in Pyrobaculum islandicum (strain DSM 4184 / JCM 9189 / GEO3).